Consider the following 1012-residue polypeptide: DNA polymerase catalytic subunit (1012 aa).

The disordered stretch occupies residues 1-31 (MDFFNPFIDPTRGGPRNTVRQPTPSQSPTVP). Over residues 21–31 (QPTPSQSPTVP) the composition is skewed to low complexity.

Belongs to the DNA polymerase type-B family. In terms of assembly, forms a complex with the ssDNA-binding protein, the DNA polymerase processivity factor, and the alkaline exonuclease. Interacts with the putative helicase-primase complex subunit; this interaction may coordinate leading and lagging strand DNA synthesis at the replication fork.

The protein localises to the host nucleus. The enzyme catalyses DNA(n) + a 2'-deoxyribonucleoside 5'-triphosphate = DNA(n+1) + diphosphate. The catalysed reaction is Endonucleolytic cleavage to 5'-phosphomonoester.. Replicates viral genomic DNA. The replication complex is composed of six viral proteins: the DNA polymerase, processivity factor, primase, primase-associated factor, helicase, and ssDNA-binding protein. Additionally, the polymerase contains an intrinsic ribonuclease H (RNase H) activity that specifically degrades RNA/DNA heteroduplexes or duplex DNA substrates in the 5' to 3' direction. Therefore, it can catalyze the excision of the RNA primers that initiate the synthesis of Okazaki fragments at a replication fork during viral DNA replication. This Human herpesvirus 8 type P (isolate GK18) (HHV-8) protein is DNA polymerase catalytic subunit (ORF9).